A 94-amino-acid chain; its full sequence is Large ribosomal subunit protein bL27 (94 aa).

Positions 1–9 (MNLANLQLF) are excised as a propeptide. Positions 11–34 (HKKGGGSTSNGRDSQAKRLGAKAA) are disordered.

Belongs to the bacterial ribosomal protein bL27 family. The N-terminus is cleaved by ribosomal processing cysteine protease Prp.

This Streptococcus pyogenes serotype M3 (strain ATCC BAA-595 / MGAS315) protein is Large ribosomal subunit protein bL27.